A 105-amino-acid polypeptide reads, in one-letter code: Large ribosomal subunit protein uL24 (105 aa).

The protein belongs to the universal ribosomal protein uL24 family. In terms of assembly, part of the 50S ribosomal subunit.

In terms of biological role, one of two assembly initiator proteins, it binds directly to the 5'-end of the 23S rRNA, where it nucleates assembly of the 50S subunit. Its function is as follows. One of the proteins that surrounds the polypeptide exit tunnel on the outside of the subunit. In Clostridium novyi (strain NT), this protein is Large ribosomal subunit protein uL24.